The following is a 340-amino-acid chain: Chitinase 7 (340 aa).

The N-terminal stretch at 1–32 is a signal peptide; sequence MIAARAANLQVAMKALALAVLALAYAAATARA. The Chitin-binding type-1 domain occupies 33 to 73; it reads EQCGRQAGGARCPNRLCCSRWGWCGLTDDYCKGGCQSQCRV. 7 cysteine pairs are disulfide-bonded: cysteine 35–cysteine 50, cysteine 44–cysteine 56, cysteine 49–cysteine 63, cysteine 67–cysteine 71, cysteine 118–cysteine 173, cysteine 185–cysteine 193, and cysteine 293–cysteine 323.

The protein belongs to the glycosyl hydrolase 19 family. Chitinase class I subfamily. As to expression, expressed in pistils, stamens and lodicules.

It carries out the reaction Random endo-hydrolysis of N-acetyl-beta-D-glucosaminide (1-&gt;4)-beta-linkages in chitin and chitodextrins.. Hydrolyzes chitin and may play a role in defense against fungal pathogens containing chitin. This chain is Chitinase 7 (Cht7), found in Oryza sativa subsp. indica (Rice).